The following is a 331-amino-acid chain: RNA/RNP complex-1-interacting phosphatase (331 aa).

Residues 61–208 (FEKHLAPEEC…LRNGPIRKNW (148 aa)) enclose the Tyrosine-protein phosphatase domain. C152 functions as the Phosphocysteine intermediate in the catalytic mechanism. 153–158 (THGVNR) is a binding site for substrate. The active-site Proton donor/acceptor is R158.

It belongs to the protein-tyrosine phosphatase family. Non-receptor class dual specificity subfamily. Monomer. May interact with SFRS7 and SFRS9/SRP30C.

The protein resides in the nucleus. It localises to the nucleus speckle. Functionally, possesses RNA 5'-triphosphatase and diphosphatase activities, but displays a poor protein-tyrosine phosphatase activity. In addition, has phosphatase activity with ATP, ADP and O-methylfluorescein phosphate (in vitro). Binds to RNA. May participate in nuclear mRNA metabolism. This is RNA/RNP complex-1-interacting phosphatase (DUSP11) from Bos taurus (Bovine).